The sequence spans 402 residues: NADH-quinone oxidoreductase subunit D 2 (402 aa).

The protein belongs to the complex I 49 kDa subunit family. As to quaternary structure, NDH-1 is composed of 14 different subunits. Subunits NuoB, C, D, E, F, and G constitute the peripheral sector of the complex.

It is found in the cell inner membrane. It carries out the reaction a quinone + NADH + 5 H(+)(in) = a quinol + NAD(+) + 4 H(+)(out). Functionally, NDH-1 shuttles electrons from NADH, via FMN and iron-sulfur (Fe-S) centers, to quinones in the respiratory chain. The immediate electron acceptor for the enzyme in this species is believed to be ubiquinone. Couples the redox reaction to proton translocation (for every two electrons transferred, four hydrogen ions are translocated across the cytoplasmic membrane), and thus conserves the redox energy in a proton gradient. In Nitrobacter hamburgensis (strain DSM 10229 / NCIMB 13809 / X14), this protein is NADH-quinone oxidoreductase subunit D 2.